A 186-amino-acid chain; its full sequence is Outer-membrane lipoprotein LolB (186 aa).

A signal peptide spans 1–16; that stretch reads MRRLAVIASLAWALGG. A lipid anchor (N-palmitoyl cysteine) is attached at C17. C17 carries S-diacylglycerol cysteine lipidation.

The protein belongs to the LolB family. In terms of assembly, monomer.

It localises to the cell outer membrane. Functionally, plays a critical role in the incorporation of lipoproteins in the outer membrane after they are released by the LolA protein. The polypeptide is Outer-membrane lipoprotein LolB (Thiobacillus denitrificans (strain ATCC 25259 / T1)).